The sequence spans 4377 residues: Ankyrin-3 (4377 aa).

Residues 1–44 (MAHAASQLKKNRDLEINAEEEPEKKRKHRKRSRDRKKKSDANAS) form a disordered region. Residues 25–38 (KRKHRKRSRDRKKK) show a composition bias toward basic residues. Ser39 bears the Phosphoserine mark. 23 ANK repeats span residues 73–102 (NGLN…NVDA), 106–135 (KGNT…NVNA), 139–168 (NGFT…SQSL), 172–201 (DGFT…KGKV), 203–230 (LPAL…NADV), 234–263 (SGFT…AVDF), 267–296 (NDIT…KIDA), 300–329 (DGLT…PILS), 333–362 (NGLS…PVDD), 366–395 (DYLT…NPNA), 399–428 (NGFT…SIQA), 432–461 (SGLT…SPNT), 465–494 (RGET…QVEA), 498–527 (DDQT…SPNA), 531–560 (SGYT…SLSI), 564–593 (KGFT…SPDA), 597–626 (SGLT…SPHA), 630–659 (NGYT…DANA), 663–692 (QGIA…NVNL), 696–725 (SGLT…HVDA), 729–758 (MGYT…KVNA), 762–791 (NGYT…SPNE), and 795–825 (NGNT…TMTT). Thr468 is modified (phosphoserine). Ser623 is subject to Phosphoserine. 2 positions are modified to phosphoserine: Thr765 and Glu791. Phosphoserine is present on residues Ser847, Ser861, Ser867, Ser913, Ser916, Ser922, Ser957, Ser959, and Ser1113. 2 consecutive ZU5 domains span residues 984 to 1139 (FLVS…VVSR) and 1141 to 1288 (KQES…LADC). The UPA domain stretch occupies residues 1273–1407 (VSFTTNVSAR…SIKIRDTSQE (135 aa)). A phosphoserine mark is found at Ser1445, Ser1459, and Ser1470. Over residues 1519–1539 (SGFTSLSSSSSNTPSASPLKS) the composition is skewed to low complexity. The interval 1519 to 1540 (SGFTSLSSSSSNTPSASPLKSI) is disordered. Ser1622, Ser1625, Ser1632, Ile1651, Leu1658, Ser1984, Ser2111, Ser2123, and Ser2126 each carry phosphoserine. Disordered regions lie at residues 1968–1987 (VDNK…SPED), 2107–2159 (TILE…VPIP), 2176–2245 (YDPS…EETH), 2299–2322 (AVSP…DNQM), 2383–2433 (FPCS…ISDD), 2474–2508 (DVSH…KIAT), 2588–2751 (LTEV…VKKI), 2795–2824 (QSNE…MPDS), 3036–3067 (PPLE…DVFD), 3131–3272 (TFYT…KKHH), 3298–3516 (PVIR…SVFP), 3538–3607 (KGLD…HEGK), 3635–3718 (GEHT…DPKL), 3868–3897 (KATS…QSEK), and 4019–4090 (KKMQ…CERT). Over residues 1977–1986 (PKSDKGHSPE) the composition is skewed to basic and acidic residues. A compositionally biased stretch (basic and acidic residues) spans 2115–2136 (FSQHDQDKSPLSDSGFETRSEK). Residues 2137–2146 (TPSAPQSAES) are compositionally biased toward polar residues. The span at 2299 to 2308 (AVSPDVHKSA) shows a compositional bias: basic and acidic residues. Residues 2390 to 2399 (GQQEEEELTA) are compositionally biased toward acidic residues. Positions 2407–2417 (LESSRVNTPVS) are enriched in polar residues. Basic and acidic residues-rich tracts occupy residues 2497–2508 (GSDKRSREKIAT) and 2588–2612 (LTEV…PEKK). Low complexity predominate over residues 2622–2631 (SSQSPTSSSP). A compositionally biased stretch (polar residues) spans 2706–2716 (SGFQLKQSKLS). Over residues 2720-2742 (LKFEQGTHAKSKDMSQEDRKSDG) the composition is skewed to basic and acidic residues. Polar residues predominate over residues 2796 to 2807 (SNEIVVNDSGSD). Composition is skewed to polar residues over residues 3154-3186 (EQVS…SKTP) and 3214-3224 (KSTSLKQTTVE). Basic and acidic residues-rich tracts occupy residues 3227-3242 (AVER…DSNQ) and 3335-3361 (KLKE…KELE). The span at 3377–3402 (SPQNEIAQNGNNDQSITECSIATTAE) shows a compositional bias: polar residues. Over residues 3409 to 3428 (ATEIDSLDGYDLQDEDDGLT) the composition is skewed to acidic residues. 2 stretches are compositionally biased toward basic and acidic residues: residues 3465–3481 (EVIE…DKPP) and 3549–3575 (RGDD…EDRS). The span at 3576–3598 (PATTPDTTPARTPTDESTPTSEP) shows a compositional bias: low complexity. Basic and acidic residues predominate over residues 3637–3651 (HTSEGKSGDQGEGDK). Composition is skewed to polar residues over residues 3654-3669 (VTAT…TVET), 3676-3713 (ETPT…NTSK), 3880-3897 (HMSN…QSEK), and 4033-4052 (SRNT…VTTK). Residues 4053 to 4076 (SARDKKTEAAPLKSKSEKAGSEKR) are compositionally biased toward basic and acidic residues. In terms of domain architecture, Death spans 4090–4174 (TDIRMAIVAD…DIVTLLEGPI (85 aa)). 2 positions are modified to phosphoserine: Ser4211 and Ser4229. Disordered stretches follow at residues 4251-4298 (NGSH…EPAS) and 4323-4377 (PVSM…KSHS). The span at 4268-4277 (PESQNDVGKQ) shows a compositional bias: polar residues. A phosphoserine mark is found at Ser4290 and Ser4298. Basic and acidic residues predominate over residues 4337–4347 (GKPRLSLHEEE). The residue at position 4350 (Ser4350) is a Phosphoserine. Over residues 4362–4377 (VKTKKEIRHVEKKSHS) the composition is skewed to basic residues.

As to quaternary structure, directly interacts with DMD and betaDAG1. This interaction does not interfere with binding between DMD and betaDAG1. It is also required for DMD and betaDAG1 retention at costameres. Interacts (via N-terminal ANK repeats) with SCHIP1 isoform 5 (via C-terminus); this interaction is required for the localization at axon initial segments (AISs) and nodes of Ranvier (NRs). May be a constituent of a NFASC/NRCAM/ankyrin G complex. Interacts with RHBG. Interacts with PLEC and FLNC. Interacts with KCNA1; this inhibits channel activity. Interacts (via ANK repeats) with IQCJ-SCHIP1; required for IQCJ-SCHIP1 localization at axon initial segments (AIS) and nodes of Ranvier. Interacts with SCHIP1. Interacts with SCN5A. Interacts with PKP2 and GJA1/CX43. In terms of tissue distribution, expressed in brain, neurons, muscles and other tissues.

The protein resides in the cytoplasm. It is found in the cytoskeleton. The protein localises to the cell projection. Its subcellular location is the axon. It localises to the cell membrane. The protein resides in the sarcolemma. It is found in the postsynaptic cell membrane. The protein localises to the lysosome. Its subcellular location is the T-tubule. It localises to the golgi apparatus. Its function is as follows. Membrane-cytoskeleton linker. May participate in the maintenance/targeting of ion channels and cell adhesion molecules at the nodes of Ranvier and axonal initial segments. In skeletal muscle, required for costamere localization of DMD and betaDAG1. Regulates KCNA1 channel activity in function of dietary Mg(2+) levels, and thereby contributes to the regulation of renal Mg(2+) reabsorption. Required for intracellular adhesion and junctional conductance in myocytes, potentially via stabilization of GJA1/CX43 protein abundance and promotion of PKP2, GJA1/CX43, and SCN5A/Nav1.5 localization to cell-cell junctions. May be part of a Golgi-specific membrane cytoskeleton in association with beta-spectrin. The sequence is that of Ankyrin-3 from Homo sapiens (Human).